The primary structure comprises 94 residues: MARRCEVTGRGTVSGNNVSHSHIKTRRTWKVNLIKKRIFLEDENRWVTIRLSTRALRTLRKKGIKAAIKDNGGSLGVLAPKKYAGITKQAPKKA.

The segment at 1-21 (MARRCEVTGRGTVSGNNVSHS) is disordered. Polar residues predominate over residues 11–20 (GTVSGNNVSH).

Belongs to the bacterial ribosomal protein bL28 family.

This chain is Large ribosomal subunit protein bL28, found in Leptospira interrogans serogroup Icterohaemorrhagiae serovar copenhageni (strain Fiocruz L1-130).